The chain runs to 324 residues: tRNA pseudouridine synthase B (324 aa).

The active-site Nucleophile is the Asp-49. The segment at 87–107 (RSTDDLEGQPTKTSDKRPSRE) is disordered.

Belongs to the pseudouridine synthase TruB family. Type 1 subfamily.

It carries out the reaction uridine(55) in tRNA = pseudouridine(55) in tRNA. In terms of biological role, responsible for synthesis of pseudouridine from uracil-55 in the psi GC loop of transfer RNAs. The chain is tRNA pseudouridine synthase B from Brucella canis (strain ATCC 23365 / NCTC 10854 / RM-666).